Reading from the N-terminus, the 272-residue chain is Undecaprenyl-diphosphatase (272 aa).

8 helical membrane passes run Met-1–Ile-21, Pro-38–Phe-58, Val-84–Phe-104, Phe-112–Ala-132, Met-145–Val-165, Pro-183–Tyr-203, Gln-219–Met-239, and Phe-250–Ile-270.

Belongs to the UppP family.

It is found in the cell membrane. The enzyme catalyses di-trans,octa-cis-undecaprenyl diphosphate + H2O = di-trans,octa-cis-undecaprenyl phosphate + phosphate + H(+). Its function is as follows. Catalyzes the dephosphorylation of undecaprenyl diphosphate (UPP). Confers resistance to bacitracin. The sequence is that of Undecaprenyl-diphosphatase from Clavibacter michiganensis subsp. michiganensis (strain NCPPB 382).